We begin with the raw amino-acid sequence, 506 residues long: MKEYQVYLERARSRQQDFLYPLIFREYIYGLAYSHNFNRSIFVENVGSDSKYSLLIVKRLITRMYQQNHLIISANDSNKNPFWGYNKNFYSQIISEGFAIVVEIPFFLEKSSSLEEAEIIKSYKNLRSIHSIFPFLEDKFTYLNYVSDIRIPYPIHLEILVQILRYWVKDAPFFHLLRLFLYNFSNWNSFITTKNSISTFSKSNPRLFLFLYNFYVCEYESIFLFLRNKSSHLRLKSFSVFFERIFFYAKREHLVEVFAKDFSYTLTFFKDPLIHYVRYQGKCILASKNSPFLMNKWKHYFIHLWQGFFYVWSQPRTIHINQLSEHSFQLLGYFLNVRVNRSVVRSQMLQNTFLIEIFSKKLDIIVPIIPLIRSLAKAKFCNVLGPLISKPVWADSSDFDIIDRFLXICRNLSHYYNGSSKKKSLYRIKYILRLSCIKTLACKHKSTVRAFLKRSGSEELLEEFFTEEEEILSLIFPRDSSTLHRLNRNRIWYLDILFSNDLVNDE.

This sequence belongs to the intron maturase 2 family. MatK subfamily.

It localises to the plastid. The protein resides in the chloroplast. Usually encoded in the trnK tRNA gene intron. Probably assists in splicing its own and other chloroplast group II introns. The sequence is that of Maturase K from Medicago sativa (Alfalfa).